A 335-amino-acid chain; its full sequence is Phosphate acyltransferase (335 aa).

This sequence belongs to the PlsX family. Homodimer. Probably interacts with PlsY.

Its subcellular location is the cytoplasm. It carries out the reaction a fatty acyl-[ACP] + phosphate = an acyl phosphate + holo-[ACP]. It participates in lipid metabolism; phospholipid metabolism. Its function is as follows. Catalyzes the reversible formation of acyl-phosphate (acyl-PO(4)) from acyl-[acyl-carrier-protein] (acyl-ACP). This enzyme utilizes acyl-ACP as fatty acyl donor, but not acyl-CoA. The polypeptide is Phosphate acyltransferase (Desulfitobacterium hafniense (strain Y51)).